Reading from the N-terminus, the 312-residue chain is Apolipoprotein E (312 aa).

The N-terminal stretch at 1-18 is a signal peptide; that stretch reads MKALWAVLLVTLLAGCLA. 8 tandem repeats follow at residues 72–93, 94–115, 116–137, 138–159, 160–181, 182–203, 204–225, and 226–247. An 8 X 22 AA approximate tandem repeats region spans residues 72 to 247; that stretch reads VLMEDTMTEV…RLEEVREHME (176 aa). Met135 is modified (methionine sulfoxide). Residue Ser139 is modified to Phosphoserine. Positions 150 to 160 are LDL and other lipoprotein receptors binding; the sequence is HLRKMRKRLMR. 154 to 157 serves as a coordination point for heparin; it reads MRKR. The tract at residues 202–282 is lipid-binding and lipoprotein association; the sequence is TANLGAGAAQ…GWFEPIVEDM (81 aa). 221–228 lines the heparin pocket; it reads GDRIRGRL. Residues 258–312 are homooligomerization; it reads QQIRLQAEIFQARLKGWFEPIVEDMHRQWANLMEKIQASVATNPIISTPMPQENQ. A specificity for association with VLDL region spans residues 270 to 282; that stretch reads RLKGWFEPIVEDM.

Belongs to the apolipoprotein A1/A4/E family. In terms of assembly, homotetramer. May interact with ABCA1; functionally associated with ABCA1 in the biogenesis of HDLs. May interact with APP/A4 amyloid-beta peptide; the interaction is extremely stable in vitro but its physiological significance is unclear. May interact with MAPT. May interact with MAP2. In the cerebrospinal fluid, interacts with secreted SORL1. Interacts with PMEL; this allows the loading of PMEL luminal fragment on ILVs to induce fibril nucleation. APOE exists as multiple glycosylated and sialylated glycoforms within cells and in plasma. The extent of glycosylation and sialylation are tissue and context specific. Post-translationally, glycated in plasma VLDL. In terms of processing, phosphorylated by FAM20C in the extracellular medium.

The protein resides in the secreted. It localises to the extracellular space. Its subcellular location is the extracellular matrix. It is found in the extracellular vesicle. The protein localises to the endosome. The protein resides in the multivesicular body. APOE is an apolipoprotein, a protein associating with lipid particles, that mainly functions in lipoprotein-mediated lipid transport between organs via the plasma and interstitial fluids. APOE is a core component of plasma lipoproteins and is involved in their production, conversion and clearance. Apolipoproteins are amphipathic molecules that interact both with lipids of the lipoprotein particle core and the aqueous environment of the plasma. As such, APOE associates with chylomicrons, chylomicron remnants, very low density lipoproteins (VLDL) and intermediate density lipoproteins (IDL) but shows a preferential binding to high-density lipoproteins (HDL). It also binds a wide range of cellular receptors including the LDL receptor/LDLR, the LDL receptor-related proteins LRP1, LRP2 and LRP8 and the very low-density lipoprotein receptor/VLDLR that mediate the cellular uptake of the APOE-containing lipoprotein particles. Finally, APOE also has a heparin-binding activity and binds heparan-sulfate proteoglycans on the surface of cells, a property that supports the capture and the receptor-mediated uptake of APOE-containing lipoproteins by cells. A main function of APOE is to mediate lipoprotein clearance through the uptake of chylomicrons, VLDLs, and HDLs by hepatocytes. APOE is also involved in the biosynthesis by the liver of VLDLs as well as their uptake by peripheral tissues ensuring the delivery of triglycerides and energy storage in muscle, heart and adipose tissues. By participating in the lipoprotein-mediated distribution of lipids among tissues, APOE plays a critical role in plasma and tissues lipid homeostasis. APOE is also involved in two steps of reverse cholesterol transport, the HDLs-mediated transport of cholesterol from peripheral tissues to the liver, and thereby plays an important role in cholesterol homeostasis. First, it is functionally associated with ABCA1 in the biogenesis of HDLs in tissues. Second, it is enriched in circulating HDLs and mediates their uptake by hepatocytes. APOE also plays an important role in lipid transport in the central nervous system, regulating neuron survival and sprouting. The protein is Apolipoprotein E (Apoe) of Mus pahari (Gairdner's shrew-mouse).